Here is a 406-residue protein sequence, read N- to C-terminus: Beta-galactoside alpha-2,6-sialyltransferase 1 (406 aa).

Over 1 to 9 (MIHTNLKKK) the chain is Cytoplasmic. Residues 10-26 (FSCCVLVFLLFAVICVW) form a helical; Signal-anchor for type II membrane protein membrane-spanning segment. Residues 27–406 (KEKKKGSYYD…TLPGFRTIHC (380 aa)) lie on the Lumenal side of the membrane. 3 disulfide bridges follow: cysteine 142-cysteine 406, cysteine 184-cysteine 335, and cysteine 353-cysteine 364. N-linked (GlcNAc...) asparagine glycosylation is found at asparagine 149 and asparagine 161. Substrate is bound by residues serine 189, asparagine 212, asparagine 233, 322–324 (SSG), cysteine 353, tyrosine 354, threonine 365, tyrosine 369, histidine 370, and lysine 376. The residue at position 369 (tyrosine 369) is a Phosphotyrosine.

The protein belongs to the glycosyltransferase 29 family. In terms of assembly, monomer and homodimer. In terms of processing, N-glycosylated.

It is found in the golgi apparatus. Its subcellular location is the golgi stack membrane. The protein localises to the secreted. It carries out the reaction a beta-D-galactoside + CMP-N-acetyl-beta-neuraminate = an N-acetyl-alpha-neuraminyl-(2-&gt;6)-beta-D-galactosyl derivative + CMP + H(+). Its pathway is protein modification; protein glycosylation. Its activity is regulated as follows. Inhibited by CTP. Its function is as follows. Transfers sialic acid from CMP-sialic acid to galactose-containing acceptor substrates. In B lymphocytes, generates neuraminidase-sensitive lymphocyte cell-surface differentiation antigens, such as CDw75, HB-6 and CD76. In Homo sapiens (Human), this protein is Beta-galactoside alpha-2,6-sialyltransferase 1 (ST6GAL1).